The chain runs to 442 residues: tRNA modification GTPase MnmE (442 aa).

(6S)-5-formyl-5,6,7,8-tetrahydrofolate-binding residues include R22, E79, and K119. Residues 216-366 enclose the TrmE-type G domain; it reads GIKTCLVGAP…LLEKIKSIFA (151 aa). Residue N226 participates in K(+) binding. Residues 226 to 231, 245 to 251, and 270 to 273 each bind GTP; these read NSGKSS, SEIPGTT, and DTAG. S230 is a binding site for Mg(2+). Residues S245, I247, and T250 each contribute to the K(+) site. A Mg(2+)-binding site is contributed by T251. K442 contributes to the (6S)-5-formyl-5,6,7,8-tetrahydrofolate binding site.

This sequence belongs to the TRAFAC class TrmE-Era-EngA-EngB-Septin-like GTPase superfamily. TrmE GTPase family. As to quaternary structure, homodimer. Heterotetramer of two MnmE and two MnmG subunits. It depends on K(+) as a cofactor.

The protein localises to the cytoplasm. Its function is as follows. Exhibits a very high intrinsic GTPase hydrolysis rate. Involved in the addition of a carboxymethylaminomethyl (cmnm) group at the wobble position (U34) of certain tRNAs, forming tRNA-cmnm(5)s(2)U34. This chain is tRNA modification GTPase MnmE, found in Mesomycoplasma hyopneumoniae (strain J / ATCC 25934 / NCTC 10110) (Mycoplasma hyopneumoniae).